The following is a 131-amino-acid chain: Large ribosomal subunit protein bL12c (131 aa).

A disordered region spans residues Gln-107–Ser-131. Residues Ser-110 to Ser-131 show a composition bias toward basic and acidic residues.

This sequence belongs to the bacterial ribosomal protein bL12 family. As to quaternary structure, homodimer. Part of the ribosomal stalk of the 50S ribosomal subunit. Forms a multimeric L10(L12)X complex, where L10 forms an elongated spine to which 2 to 4 L12 dimers bind in a sequential fashion. Binds GTP-bound translation factors.

Its subcellular location is the plastid. The protein resides in the chloroplast. Its function is as follows. Forms part of the ribosomal stalk which helps the ribosome interact with GTP-bound translation factors. Is thus essential for accurate translation. In Chlorella vulgaris (Green alga), this protein is Large ribosomal subunit protein bL12c.